The chain runs to 196 residues: dITP/XTP pyrophosphatase (196 aa).

Position 10–15 (10–15 (TTNPHK)) interacts with substrate. D68 functions as the Proton acceptor in the catalytic mechanism. Residue D68 coordinates Mg(2+). Substrate-binding positions include S69, 148-151 (FGYD), and 175-176 (HR).

This sequence belongs to the HAM1 NTPase family. In terms of assembly, homodimer. Requires Mg(2+) as cofactor.

The catalysed reaction is XTP + H2O = XMP + diphosphate + H(+). The enzyme catalyses dITP + H2O = dIMP + diphosphate + H(+). It carries out the reaction ITP + H2O = IMP + diphosphate + H(+). Its function is as follows. Pyrophosphatase that catalyzes the hydrolysis of nucleoside triphosphates to their monophosphate derivatives, with a high preference for the non-canonical purine nucleotides XTP (xanthosine triphosphate), dITP (deoxyinosine triphosphate) and ITP. Seems to function as a house-cleaning enzyme that removes non-canonical purine nucleotides from the nucleotide pool, thus preventing their incorporation into DNA/RNA and avoiding chromosomal lesions. The polypeptide is dITP/XTP pyrophosphatase (Thermotoga maritima (strain ATCC 43589 / DSM 3109 / JCM 10099 / NBRC 100826 / MSB8)).